Reading from the N-terminus, the 417-residue chain is Gamma-glutamyl phosphate reductase (417 aa).

Belongs to the gamma-glutamyl phosphate reductase family.

The protein resides in the cytoplasm. It carries out the reaction L-glutamate 5-semialdehyde + phosphate + NADP(+) = L-glutamyl 5-phosphate + NADPH + H(+). It functions in the pathway amino-acid biosynthesis; L-proline biosynthesis; L-glutamate 5-semialdehyde from L-glutamate: step 2/2. Functionally, catalyzes the NADPH-dependent reduction of L-glutamate 5-phosphate into L-glutamate 5-semialdehyde and phosphate. The product spontaneously undergoes cyclization to form 1-pyrroline-5-carboxylate. The protein is Gamma-glutamyl phosphate reductase of Escherichia coli O6:H1 (strain CFT073 / ATCC 700928 / UPEC).